The chain runs to 94 residues: C-X-C motif chemokine 11 (94 aa).

An N-terminal signal peptide occupies residues methionine 1–glycine 21. Residue arginine 27 is modified to Citrulline; by PAD2. 2 disulfide bridges follow: cysteine 30/cysteine 57 and cysteine 32/cysteine 74.

Interacts with TNFAIP6 (via Link domain). High levels in peripheral blood leukocytes, pancreas and liver astrocytes. Moderate levels in thymus, spleen and lung. Low levels in placenta, prostate and small intestine. Also found in epidermal basal layer keratinocytes in skin disorders.

It localises to the secreted. Its function is as follows. Chemotactic for interleukin-activated T-cells but not unstimulated T-cells, neutrophils or monocytes. Induces calcium release in activated T-cells. Binds to CXCR3. May play an important role in CNS diseases which involve T-cell recruitment. May play a role in skin immune responses. The chain is C-X-C motif chemokine 11 (CXCL11) from Homo sapiens (Human).